Reading from the N-terminus, the 284-residue chain is Serine/threonine-protein phosphatase Pgam5, mitochondrial (284 aa).

Residues 8–24 (LGVPTATLAVGTLLLGD) traverse the membrane as a helical segment.

It belongs to the phosphoglycerate mutase family. BPG-dependent PGAM subfamily. As to quaternary structure, interacts with skn-1 isoforms a and c.

It is found in the mitochondrion outer membrane. It carries out the reaction O-phospho-L-seryl-[protein] + H2O = L-seryl-[protein] + phosphate. The catalysed reaction is O-phospho-L-threonyl-[protein] + H2O = L-threonyl-[protein] + phosphate. Functionally, displays phosphatase activity for serine/threonine residues. Has apparently no phosphoglycerate mutase activity. In Caenorhabditis elegans, this protein is Serine/threonine-protein phosphatase Pgam5, mitochondrial (pgam-5).